Consider the following 294-residue polypeptide: MANITAQMVKELREKTGAGMMDCKKALVETEGDMEKAIDYLREKGIAKAAKKSDRVASEGMTHVISNEKHAVVLEVNAETDFVAKNDNFQQLVDALAKQILEVRPDSLEDALKTEMPNGQTVQDYITEAITKIGENISLRRFEVKEKADNSAFGEYIHMNGRIGVLTLLEGTTDTTVAKDVAMHIAAINPKYISREDVSTEEVEHEKEVLTQQALNEGKPANIVEKMVEGRLKKYLSEISLEDQPFVKNPDITVGEYVKQSGGKVVSFVRFEVGEGIEKKEDNFVEEVMSQVKK.

The involved in Mg(2+) ion dislocation from EF-Tu stretch occupies residues 80-83; that stretch reads TDFV.

The protein belongs to the EF-Ts family.

The protein resides in the cytoplasm. In terms of biological role, associates with the EF-Tu.GDP complex and induces the exchange of GDP to GTP. It remains bound to the aminoacyl-tRNA.EF-Tu.GTP complex up to the GTP hydrolysis stage on the ribosome. The polypeptide is Elongation factor Ts (Listeria innocua serovar 6a (strain ATCC BAA-680 / CLIP 11262)).